The sequence spans 49 residues: Astexin-2 (49 aa).

Residues 1 to 25 (MTKRTTIAARRVGLIDLGKATRQTK) constitute a propeptide that is removed on maturation. A cross-link (isoaspartyl glycine isopeptide (Gly-Asp)) is located at residues 26–34 (GLTQIQALD).

This lasso peptide is hydrolyzed to a linear form by the isopeptidase AtxE2, in vitro. The isopeptidase AtxE2 only recognizes the threaded form (but not the unthreaded form).

It is found in the cytoplasm. The protein resides in the secreted. Functionally, shows weak antimicrobial activity against its phylogenetic relative Caulobacter crescentus. Does not show activity against other bacteria tested (E.coli, Vibrio sp, Burkhoderia thailandensis, and Salmonella newport). The chain is Astexin-2 from Asticcacaulis excentricus (strain ATCC 15261 / DSM 4724 / KCTC 12464 / NCIMB 9791 / VKM B-1370 / CB 48).